A 208-amino-acid polypeptide reads, in one-letter code: Ypt/Rab-type GTPase ypt71 (208 aa).

GTP is bound by residues 17 to 23 (SGVGKTC), 33 to 40 (FSREYKAT), G66, 124 to 127 (NQID), and 158 to 160 (SAK). The short motif at 37–45 (YKATIGADF) is the Effector region element. 2 S-geranylgeranyl cysteine lipidation sites follow: C206 and C208. C208 carries the post-translational modification Cysteine methyl ester.

This sequence belongs to the small GTPase superfamily. Rab family.

The protein resides in the vacuole membrane. Its activity is regulated as follows. Rab activation is generally mediated by a guanine exchange factor (GEF), while inactivation through hydrolysis of bound GTP is catalyzed by a GTPase activating protein (GAP). Its function is as follows. Ypt/Rab-type GTPases are key regulators of membrane trafficking and intracellular vesicular transport. They act as molecular switches that convert between GTP-bound and GDP-bound states, and regulate virtually all steps of membrane traffic from the formation of the transport vesicle at the donor membrane to its fusion at the target membrane. In the GDP-bound state, Ypt proteins are predominantly cytosolic, solubilized through the interaction with a GDP dissociation inhibitor (GDI). In the GTP-bound state, the proteins are membrane bound and interact with specific effector proteins that select cargo, promote vesicle movement, or verify the correct site of fusion. Act antagonistically to ypt7 in regulating vacuolar morphology, promoting vacuolar fission. The sequence is that of Ypt/Rab-type GTPase ypt71 (ypt71) from Schizosaccharomyces pombe (strain 972 / ATCC 24843) (Fission yeast).